The sequence spans 105 residues: PTS system lactose-specific EIIA component (105 aa).

A PTS EIIA type-3 domain is found at 4 to 102; sequence EEMTLLGFEI…IHHLIELYKR (99 aa). H78 serves as the catalytic Tele-phosphohistidine intermediate. Phosphohistidine; by HPr is present on H78. D81 contacts Mg(2+).

As to quaternary structure, homotrimer. It depends on Mg(2+) as a cofactor.

It is found in the cytoplasm. Functionally, the phosphoenolpyruvate-dependent sugar phosphotransferase system (sugar PTS), a major carbohydrate active transport system, catalyzes the phosphorylation of incoming sugar substrates concomitantly with their translocation across the cell membrane. The enzyme II LacEF PTS system is involved in lactose transport. In Lactococcus lactis subsp. lactis (Streptococcus lactis), this protein is PTS system lactose-specific EIIA component.